The primary structure comprises 264 residues: Synaptophysin-like protein 2 (264 aa).

The Cytoplasmic segment spans residues 1 to 33 (MSSTESPSRAADKSPRQQVDRLLEGLRWRRLEE). The MARVEL domain maps to 30–238 (RLEEPLGFIK…NCWFVFKETP (209 aa)). Residues 34-54 (PLGFIKVLQWLFAIFAFGSCG) traverse the membrane as a helical segment. Topologically, residues 55–116 (SYSGETGAMV…LMGDFSAPAE (62 aa)) are vesicular. A helical membrane pass occupies residues 117–137 (FFVTLGIFSFFYTMAALVVYL). At 138 to 150 (RFHKLYTENKRFP) the chain is on the cytoplasmic side. Residues 151-171 (LVDFCVTVSFTFFWLVAAAAW) form a helical membrane-spanning segment. The Vesicular segment spans residues 172–213 (GKGLTDVKGATRPSSLTAAMSVCHGEEAVCSAGATPSMGLAN). N-linked (GlcNAc...) asparagine glycosylation occurs at Asn213. Residues 214 to 234 (ISVLFGFINFFLWAGNCWFVF) form a helical membrane-spanning segment. Residues 235-264 (KETPWHGQGQDQGQGPSQESAAEQGAVEKQ) are Cytoplasmic-facing. A disordered region spans residues 242–264 (QGQDQGQGPSQESAAEQGAVEKQ).

The protein belongs to the synaptophysin/synaptobrevin family. In terms of tissue distribution, skeletal muscle.

The protein resides in the membrane. In terms of biological role, involved in communication between the T-tubular and junctional sarcoplasmic reticulum (SR) membranes. In Oryctolagus cuniculus (Rabbit), this protein is Synaptophysin-like protein 2 (SYPL2).